A 311-amino-acid chain; its full sequence is Aspartate carbamoyltransferase catalytic subunit (311 aa).

Positions 55 and 56 each coordinate carbamoyl phosphate. Residue Lys-85 coordinates L-aspartate. Arg-106, His-135, and Gln-138 together coordinate carbamoyl phosphate. L-aspartate is bound by residues Arg-168 and Arg-230. Residues Leu-268 and Pro-269 each contribute to the carbamoyl phosphate site.

This sequence belongs to the aspartate/ornithine carbamoyltransferase superfamily. ATCase family. Heterododecamer (2C3:3R2) of six catalytic PyrB chains organized as two trimers (C3), and six regulatory PyrI chains organized as three dimers (R2).

It catalyses the reaction carbamoyl phosphate + L-aspartate = N-carbamoyl-L-aspartate + phosphate + H(+). It functions in the pathway pyrimidine metabolism; UMP biosynthesis via de novo pathway; (S)-dihydroorotate from bicarbonate: step 2/3. Its function is as follows. Catalyzes the condensation of carbamoyl phosphate and aspartate to form carbamoyl aspartate and inorganic phosphate, the committed step in the de novo pyrimidine nucleotide biosynthesis pathway. The polypeptide is Aspartate carbamoyltransferase catalytic subunit (Buchnera aphidicola subsp. Schizaphis graminum (strain Sg)).